Reading from the N-terminus, the 334-residue chain is tRNA dimethylallyltransferase (334 aa).

Glycine 22 to threonine 29 is a binding site for ATP. Threonine 24–threonine 29 serves as a coordination point for substrate.

Belongs to the IPP transferase family. As to quaternary structure, monomer. The cofactor is Mg(2+).

It carries out the reaction adenosine(37) in tRNA + dimethylallyl diphosphate = N(6)-dimethylallyladenosine(37) in tRNA + diphosphate. Functionally, catalyzes the transfer of a dimethylallyl group onto the adenine at position 37 in tRNAs that read codons beginning with uridine, leading to the formation of N6-(dimethylallyl)adenosine (i(6)A). The protein is tRNA dimethylallyltransferase of Rhodopirellula baltica (strain DSM 10527 / NCIMB 13988 / SH1).